A 272-amino-acid polypeptide reads, in one-letter code: Ribosomal RNA small subunit methyltransferase A (272 aa).

Residues Asn-18, Leu-20, Gly-45, Glu-66, Asp-91, and Asn-113 each coordinate S-adenosyl-L-methionine.

Belongs to the class I-like SAM-binding methyltransferase superfamily. rRNA adenine N(6)-methyltransferase family. RsmA subfamily.

The protein resides in the cytoplasm. It carries out the reaction adenosine(1518)/adenosine(1519) in 16S rRNA + 4 S-adenosyl-L-methionine = N(6)-dimethyladenosine(1518)/N(6)-dimethyladenosine(1519) in 16S rRNA + 4 S-adenosyl-L-homocysteine + 4 H(+). Specifically dimethylates two adjacent adenosines (A1518 and A1519) in the loop of a conserved hairpin near the 3'-end of 16S rRNA in the 30S particle. May play a critical role in biogenesis of 30S subunits. The sequence is that of Ribosomal RNA small subunit methyltransferase A from Proteus mirabilis (strain HI4320).